Here is a 122-residue protein sequence, read N- to C-terminus: Small ribosomal subunit protein uS13 (122 aa).

Positions 95-122 are disordered; the sequence is SLPCRGQRTSTNARTRKGPKRAAVKKKK. The segment covering 108–122 has biased composition (basic residues); sequence RTRKGPKRAAVKKKK.

It belongs to the universal ribosomal protein uS13 family. As to quaternary structure, part of the 30S ribosomal subunit. Forms a loose heterodimer with protein S19. Forms two bridges to the 50S subunit in the 70S ribosome.

Located at the top of the head of the 30S subunit, it contacts several helices of the 16S rRNA. In the 70S ribosome it contacts the 23S rRNA (bridge B1a) and protein L5 of the 50S subunit (bridge B1b), connecting the 2 subunits; these bridges are implicated in subunit movement. Contacts the tRNAs in the A and P-sites. This chain is Small ribosomal subunit protein uS13, found in Desulforapulum autotrophicum (strain ATCC 43914 / DSM 3382 / VKM B-1955 / HRM2) (Desulfobacterium autotrophicum).